A 329-amino-acid polypeptide reads, in one-letter code: Beta-ketoacyl-[acyl-carrier-protein] synthase III (329 aa).

Residues C112 and H253 contribute to the active site. The segment at 254 to 258 is ACP-binding; it reads QANQR. The active site involves N283.

It belongs to the thiolase-like superfamily. FabH family. In terms of assembly, homodimer.

It is found in the cytoplasm. It catalyses the reaction malonyl-[ACP] + acetyl-CoA + H(+) = 3-oxobutanoyl-[ACP] + CO2 + CoA. It participates in lipid metabolism; fatty acid biosynthesis. Functionally, catalyzes the condensation reaction of fatty acid synthesis by the addition to an acyl acceptor of two carbons from malonyl-ACP. Catalyzes the first condensation reaction which initiates fatty acid synthesis and may therefore play a role in governing the total rate of fatty acid production. Possesses both acetoacetyl-ACP synthase and acetyl transacylase activities. Its substrate specificity determines the biosynthesis of branched-chain and/or straight-chain of fatty acids. This is Beta-ketoacyl-[acyl-carrier-protein] synthase III from Gloeobacter violaceus (strain ATCC 29082 / PCC 7421).